The following is a 127-amino-acid chain: Large ribosomal subunit protein eL32B (127 aa).

Belongs to the eukaryotic ribosomal protein eL32 family. In terms of assembly, component of the large ribosomal subunit (LSU). Mature yeast ribosomes consist of a small (40S) and a large (60S) subunit. The 40S small subunit contains 1 molecule of ribosomal RNA (18S rRNA) and at least 33 different proteins. The large 60S subunit contains 3 rRNA molecules (25S, 5.8S and 5S rRNA) and at least 46 different proteins.

The protein localises to the cytoplasm. It is found in the nucleus. The protein resides in the nucleolus. Component of the ribosome, a large ribonucleoprotein complex responsible for the synthesis of proteins in the cell. The small ribosomal subunit (SSU) binds messenger RNAs (mRNAs) and translates the encoded message by selecting cognate aminoacyl-transfer RNA (tRNA) molecules. The large subunit (LSU) contains the ribosomal catalytic site termed the peptidyl transferase center (PTC), which catalyzes the formation of peptide bonds, thereby polymerizing the amino acids delivered by tRNAs into a polypeptide chain. The nascent polypeptides leave the ribosome through a tunnel in the LSU and interact with protein factors that function in enzymatic processing, targeting, and the membrane insertion of nascent chains at the exit of the ribosomal tunnel. The protein is Large ribosomal subunit protein eL32B (rpl3201) of Schizosaccharomyces pombe (strain 972 / ATCC 24843) (Fission yeast).